A 200-amino-acid polypeptide reads, in one-letter code: Large ribosomal subunit protein uL4 (200 aa).

Positions 38–68 are disordered; it reads GRQGSKQQKTRSDVRGGGKRPWRQKGTGRAR. Residues 54–65 show a composition bias toward basic residues; that stretch reads GGKRPWRQKGTG.

This sequence belongs to the universal ribosomal protein uL4 family. Part of the 50S ribosomal subunit.

Functionally, one of the primary rRNA binding proteins, this protein initially binds near the 5'-end of the 23S rRNA. It is important during the early stages of 50S assembly. It makes multiple contacts with different domains of the 23S rRNA in the assembled 50S subunit and ribosome. In terms of biological role, forms part of the polypeptide exit tunnel. The sequence is that of Large ribosomal subunit protein uL4 from Pseudomonas savastanoi pv. phaseolicola (strain 1448A / Race 6) (Pseudomonas syringae pv. phaseolicola (strain 1448A / Race 6)).